The sequence spans 130 residues: U-scoloptoxin(17)-Er1a (130 aa).

Residues 1-18 (MKLLVFALFLQVVQLSLA) form the signal peptide.

It belongs to the scoloptoxin-17 family. Contains 4 disulfide bonds. In terms of tissue distribution, expressed by the venom gland.

It localises to the secreted. The polypeptide is U-scoloptoxin(17)-Er1a (Ethmostigmus rubripes (Giant centipede)).